A 150-amino-acid chain; its full sequence is uncharacterized protein (150 aa).

The region spanning 4–149 is the N-acetyltransferase domain; that stretch reads IQIRNYQPGD…TNFYMRYKPQ (146 aa).

It belongs to the acetyltransferase family.

This is an uncharacterized protein from Escherichia coli (strain K12).